A 701-amino-acid polypeptide reads, in one-letter code: Elongation factor G (701 aa).

The tr-type G domain occupies 8 to 291 (GRYRNIGIVA…AVIDYLPAPT (284 aa)). Residues 17–24 (AHVDAGKT), 89–93 (DTPGH), and 143–146 (NKMD) contribute to the GTP site.

This sequence belongs to the TRAFAC class translation factor GTPase superfamily. Classic translation factor GTPase family. EF-G/EF-2 subfamily.

The protein resides in the cytoplasm. Functionally, catalyzes the GTP-dependent ribosomal translocation step during translation elongation. During this step, the ribosome changes from the pre-translocational (PRE) to the post-translocational (POST) state as the newly formed A-site-bound peptidyl-tRNA and P-site-bound deacylated tRNA move to the P and E sites, respectively. Catalyzes the coordinated movement of the two tRNA molecules, the mRNA and conformational changes in the ribosome. The polypeptide is Elongation factor G (Pseudomonas savastanoi pv. phaseolicola (strain 1448A / Race 6) (Pseudomonas syringae pv. phaseolicola (strain 1448A / Race 6))).